Reading from the N-terminus, the 101-residue chain is Putative membrane protein insertion efficiency factor (101 aa).

This sequence belongs to the UPF0161 family.

Its subcellular location is the cell membrane. Its function is as follows. Could be involved in insertion of integral membrane proteins into the membrane. This Lacticaseibacillus casei (strain BL23) (Lactobacillus casei) protein is Putative membrane protein insertion efficiency factor.